Consider the following 395-residue polypeptide: tRNA-specific 2-thiouridylase MnmA (395 aa).

Residues Gly-7–Ser-14 and Met-33 contribute to the ATP site. The interaction with target base in tRNA stretch occupies residues Asn-95 to Asp-97. Cys-100 functions as the Nucleophile in the catalytic mechanism. An intrachain disulfide couples Cys-100 to Cys-200. Gly-124 serves as a coordination point for ATP. The tract at residues Lys-150–Gln-152 is interaction with tRNA. Cys-200 serves as the catalytic Cysteine persulfide intermediate. Residues Arg-346 to Tyr-347 are interaction with tRNA.

This sequence belongs to the MnmA/TRMU family.

Its subcellular location is the cytoplasm. The catalysed reaction is S-sulfanyl-L-cysteinyl-[protein] + uridine(34) in tRNA + AH2 + ATP = 2-thiouridine(34) in tRNA + L-cysteinyl-[protein] + A + AMP + diphosphate + H(+). Catalyzes the 2-thiolation of uridine at the wobble position (U34) of tRNA, leading to the formation of s(2)U34. The sequence is that of tRNA-specific 2-thiouridylase MnmA from Christiangramia forsetii (strain DSM 17595 / CGMCC 1.15422 / KT0803) (Gramella forsetii).